The primary structure comprises 665 residues: Fermitin family homolog 3 (665 aa).

At Y11 the chain carries Phosphotyrosine. The FERM domain occupies 229–556 (WLDSSRCLMQ…SLPDFGISYV (328 aa)). The PH domain maps to 354–453 (DHLRIFRPRK…WMAGCRLASK (100 aa)). At Y502 the chain carries Phosphotyrosine. A Phosphothreonine modification is found at T589.

This sequence belongs to the kindlin family. Interacts with ITGB1, ITGB2 and ITGB3 (via cytoplasmic tails).

Its subcellular location is the cell projection. The protein localises to the podosome. Functionally, plays a central role in cell adhesion in hematopoietic cells. Acts by activating the integrin beta-1-3 (ITGB1, ITGB2 and ITGB3). Required for integrin-mediated platelet adhesion and leukocyte adhesion to endothelial cells. Required for activation of integrin beta-2 (ITGB2) in polymorphonuclear granulocytes (PMNs). In Bos taurus (Bovine), this protein is Fermitin family homolog 3 (FERMT3).